Here is a 379-residue protein sequence, read N- to C-terminus: Bifunctional riboflavin kinase/FMN phosphatase (379 aa).

Serine 2 is subject to N-acetylserine. The Nucleophile; for FMN phosphatase activity role is filled by aspartate 17. The Mg(2+) site is built by aspartate 17 and aspartate 19. The active-site Proton donor; for FMN phosphatase activity is aspartate 19. ATP contacts are provided by glycine 248, lysine 254, threonine 260, and asparagine 262. A Mg(2+)-binding site is contributed by threonine 260. Glutamate 312 acts as the Nucleophile; for riboflavin kinase activity in catalysis. Residues leucine 315, histidine 317, and tyrosine 324 each coordinate ATP. Arginine 337 and phenylalanine 342 together coordinate FMN.

In the N-terminal section; belongs to the HAD-like hydrolase superfamily. CbbY/CbbZ/Gph/YieH family. It in the C-terminal section; belongs to the flavokinase family. As to quaternary structure, monomer. Mg(2+) is required as a cofactor.

It carries out the reaction riboflavin + ATP = FMN + ADP + H(+). It catalyses the reaction FMN + H2O = riboflavin + phosphate. The protein operates within cofactor biosynthesis; FMN biosynthesis; FMN from riboflavin (ATP route): step 1/1. Bifunctional enzyme that catalyzes the hydrolysis of flavin-mononucleotide (FMN) to riboflavin (vitamin B2) and the phosphorylation of riboflavin to form (FMN) coenzyme. This chain is Bifunctional riboflavin kinase/FMN phosphatase, found in Arabidopsis thaliana (Mouse-ear cress).